The chain runs to 669 residues: RNA-binding protein 14 (669 aa).

2 consecutive RRM domains span residues 1-73 (MKIF…MSRP) and 79-149 (WKIF…LSTK). Glycyl lysine isopeptide (Lys-Gly) (interchain with G-Cter in SUMO2) cross-links involve residues lysine 126, lysine 135, lysine 138, lysine 149, and lysine 153. Disordered stretches follow at residues 147–175 (STKG…DTAF) and 193–232 (NSTG…PLTA). Serine 161 is subject to Phosphoserine. N6-acetyllysine; alternate is present on lysine 164. A Glycyl lysine isopeptide (Lys-Gly) (interchain with G-Cter in SUMO2); alternate cross-link involves residue lysine 164. A Phosphothreonine modification is found at threonine 206. Residues serine 220, serine 242, serine 244, serine 256, serine 272, and serine 280 each carry the phosphoserine modification. The tract at residues 284–303 (PYRGQLASPSSQSAAASSLG) is disordered. Residues 287 to 303 (GQLASPSSQSAAASSLG) show a composition bias toward low complexity. The TRBP-interacting domain; interaction with STIL stretch occupies residues 307 to 354 (GAQPSASALSSYGGQAAAASSLNSYGAQGSSLASYGNQPSSYGAQAAS). A phosphoserine mark is found at serine 520, serine 523, serine 527, and serine 562. Positions 566-592 (VANANSTPPPYERTRLSPPRASYDDPY) are disordered. At threonine 572 the chain carries Phosphothreonine. Phosphoserine is present on serine 582. Lysine 600 participates in a covalent cross-link: Glycyl lysine isopeptide (Lys-Gly) (interchain with G-Cter in SUMO2). Phosphoserine is present on residues serine 618, serine 620, serine 623, serine 627, serine 643, and serine 649.

Interacts with NCOA6, CITED1 and XRCC5/KU86. Interacts with SS18. Interacts with STIL and interferes with its interaction with CPAP. Interacts with gamma-tubulin. Part of the HDP-RNP complex composed of at least HEXIM1, PRKDC, XRCC5, XRCC6, paraspeckle proteins (SFPQ, NONO, PSPC1, RBM14, and MATR3) and NEAT1 RNA.

It localises to the nucleus. Its subcellular location is the nucleolus. The protein localises to the cytoplasm. Its function is as follows. May function as a nuclear receptor coactivator, enhancing transcription through other coactivators such as NCOA6 and CITED1. Regulates centriole biogenesis by suppressing the formation of aberrant centriolar protein complexes in the cytoplasm and thus preserving mitotic spindle integrity. Prevents the formation of the STIL-CPAP complex (which can induce the formation of aberrant centriolar protein complexes) by interfering with the interaction of STIL with CPAP. Plays a role in the regulation of DNA virus-mediated innate immune response by assembling into the HDP-RNP complex, a complex that serves as a platform for IRF3 phosphorylation and subsequent innate immune response activation through the cGAS-STING pathway. The protein is RNA-binding protein 14 (RBM14) of Pongo abelii (Sumatran orangutan).